A 514-amino-acid chain; its full sequence is Uronyl 2-sulfotransferase homolog pip (514 aa).

Residues 1–30 (MSLNAERSYKMKLRDVENAFKYRRIPYPKR) lie on the Cytoplasmic side of the membrane. A helical; Signal-anchor for type II membrane protein membrane pass occupies residues 31-50 (SVELIALLAISCTFFLFMHT). At 51–514 (NKLNSRLKEM…EQQNEYNEDY (464 aa)) the chain is on the lumenal side. Over residues 112–121 (HDRRSSEEQL) the composition is skewed to basic and acidic residues. A disordered region spans residues 112–185 (HDRRSSEEQL…DEDEVEENDD (74 aa)). Basic residues predominate over residues 127–140 (HGHHHDHHSHHHHM). Positions 155–170 (HDKQLAVPDNKHKEDE) are enriched in basic and acidic residues. Over residues 171–185 (VHYEDDEDEVEENDD) the composition is skewed to acidic residues. A glycan (N-linked (GlcNAc...) asparagine) is linked at asparagine 207. Histidine 282 is an active-site residue. Asparagine 287, asparagine 416, asparagine 451, and asparagine 467 each carry an N-linked (GlcNAc...) asparagine glycan.

Belongs to the sulfotransferase 3 family. In terms of assembly, interacts with wbl/windbeutel; the interaction is direct and does not require pip to be folded. In terms of tissue distribution, ovary-specific. Specifically expressed in the ventral follicle cells of stage 9-10 egg chambers. Expressed in ovaries. Specifically expressed in the ventral follicle cells of stage 9-10 egg chambers.

The protein resides in the golgi apparatus membrane. Sulfotransferase involved in dorsoventral axis patterning in early embryos. Required for the ventral activation of ea/easter by the protease snk in the perivitelline space between the embryonic membrane and the eggshell; activation of ea requires both activation of the ndl-gd-snk protease cascade and sulfation of a vitelline membrane component by pip. Probably acts by mediating the sulfation of some glycoprotein or glycosaminoglycan stably deposited in the vitelline membrane, whose ventrally localized modification leads to spatially restricted activation of the protease cascade resulting in localized activation of the spz Toll receptor ligand by ea. Its function is as follows. Probably required redundantly with isoform H for dorsoventral axis patterning in embryos. Lacks 2-O-sulfotransferase activity towards completely desulfated N-sulfated (CDSNS) heparin, chondroitin, and chondroitin sulfate A, B (dermatan sulfate), and C. Sulfates several components of the eggshell vitelline membrane, including Vml, Vm26Aa, Vm32E and psd/palisade/Fcp26Aa. Functionally, probably required redundantly with isoform A for dorsoventral axis patterning in embryos. In terms of biological role, lacks 2-O-sulfotransferase activity towards CDSNS heparin, chondroitin, and chondroitin sulfate A, B (dermatan sulfate), and C. This chain is Uronyl 2-sulfotransferase homolog pip, found in Drosophila melanogaster (Fruit fly).